We begin with the raw amino-acid sequence, 196 residues long: GTP cyclohydrolase-2 (196 aa).

GTP is bound at residue 49 to 53 (RVHSE). Cys-54, Cys-65, and Cys-67 together coordinate Zn(2+). GTP-binding positions include Gln-70, 92–94 (EGR), and Thr-114. Residue Asp-126 is the Proton acceptor of the active site. The active-site Nucleophile is Arg-128. Positions 149 and 154 each coordinate GTP.

Belongs to the GTP cyclohydrolase II family. Homodimer. Zn(2+) is required as a cofactor.

It catalyses the reaction GTP + 4 H2O = 2,5-diamino-6-hydroxy-4-(5-phosphoribosylamino)-pyrimidine + formate + 2 phosphate + 3 H(+). Its pathway is cofactor biosynthesis; riboflavin biosynthesis; 5-amino-6-(D-ribitylamino)uracil from GTP: step 1/4. Catalyzes the conversion of GTP to 2,5-diamino-6-ribosylamino-4(3H)-pyrimidinone 5'-phosphate (DARP), formate and pyrophosphate. This Shigella boydii serotype 18 (strain CDC 3083-94 / BS512) protein is GTP cyclohydrolase-2.